Consider the following 611-residue polypeptide: Autophagy-related protein 22-2 (611 aa).

Positions 1 to 24 (MRADDNPSARSLHAQFPGDDTRPT) are disordered. A helical transmembrane segment spans residues 35-55 (YGWAAEVFTVCAMGSFLPITL). Residue N78 is glycosylated (N-linked (GlcNAc...) asparagine). 3 consecutive transmembrane segments (helical) span residues 116–136 (TASF…VLII), 151–171 (LLVA…SVVP), and 175–195 (IVGA…FVLL). N221 carries N-linked (GlcNAc...) asparagine glycosylation. The next 2 helical transmembrane spans lie at 286-306 (IGIG…VIIA) and 316-336 (LVLF…ALWL). N353 is a glycosylation site (N-linked (GlcNAc...) asparagine). Transmembrane regions (helical) follow at residues 380 to 400 (ILLF…VSGT), 414 to 434 (AALG…AFSW), 449 to 469 (IIAC…GFVP), 483 to 503 (WEMF…SSYC), 521 to 541 (ALYA…VGLI), and 551 to 571 (AFVF…LVDV).

This sequence belongs to the ATG22 family.

The protein localises to the vacuole membrane. Functionally, vacuolar effluxer which mediate the efflux of amino acids resulting from autophagic degradation. The release of autophagic amino acids allows the maintenance of protein synthesis and viability during nitrogen starvation. The polypeptide is Autophagy-related protein 22-2 (atg22-2) (Aspergillus clavatus (strain ATCC 1007 / CBS 513.65 / DSM 816 / NCTC 3887 / NRRL 1 / QM 1276 / 107)).